Here is an 873-residue protein sequence, read N- to C-terminus: DNA mismatch repair protein MutS (873 aa).

625 to 632 contributes to the ATP binding site; the sequence is GPNMGGKS.

This sequence belongs to the DNA mismatch repair MutS family.

Functionally, this protein is involved in the repair of mismatches in DNA. It is possible that it carries out the mismatch recognition step. This protein has a weak ATPase activity. This Xanthomonas campestris pv. campestris (strain 8004) protein is DNA mismatch repair protein MutS.